A 1118-amino-acid polypeptide reads, in one-letter code: Cytospin-A (1118 aa).

Disordered stretches follow at residues 1 to 63, 75 to 176, 294 to 324, and 359 to 391; these read MKKA…AGMA, KKST…NQIS, SLSP…GSVE, and SSDD…NASE. A compositionally biased stretch (low complexity) spans 80–90; sequence SSAAPSAPAPA. Positions 93-117 are enriched in polar residues; it reads ISENKSKISTGTSSSAKRSTSAGNK. Basic and acidic residues predominate over residues 120–131; that stretch reads SSTRERLRERTR. Positions 133–145 are enriched in polar residues; that stretch reads NQSKKLPSVSQGA. Over residues 158 to 171 the composition is skewed to basic and acidic residues; sequence TAAEGDIRMSKSKS. Positions 168 to 281 form a coiled coil; that stretch reads KSKSDNQISD…LNALGFSLEQ (114 aa). Over residues 294 to 304 the composition is skewed to polar residues; that stretch reads SLSPEITPGNQ. Residues 359-373 show a composition bias toward low complexity; sequence SSDDALDAPSSSESE. Phosphoserine is present on residues S385, S386, and S390. Coiled coils occupy residues 395 to 450 and 488 to 808; these read ACLT…MESL and RYME…RGRV. S869, S882, and S888 each carry phosphoserine. A disordered region spans residues 921-999; the sequence is TSSTSRPASL…STRSRIREER (79 aa). Positions 947–957 are enriched in basic and acidic residues; sequence RSSEEMKRDIS. Residues 972-992 are compositionally biased toward low complexity; the sequence is TTSPQLSLSSSPTASVTPSTR. Residues 1012–1117 enclose the Calponin-homology (CH) domain; sequence GSKRNALLKW…YVTAIYKYFE (106 aa).

The protein belongs to the cytospin-A family. As to quaternary structure, may interact with both microtubules and actin cytoskeleton.

It localises to the cytoplasm. The protein localises to the cytoskeleton. Its subcellular location is the spindle. The protein resides in the cell junction. It is found in the gap junction. Involved in cytokinesis and spindle organization. May play a role in actin cytoskeleton organization and microtubule stabilization and hence required for proper cell adhesion and migration. This is Cytospin-A (Specc1l) from Mus musculus (Mouse).